Reading from the N-terminus, the 156-residue chain is Ribosomal RNA large subunit methyltransferase H (156 aa).

Residues L73, G104, and 123–128 (ISSMTL) contribute to the S-adenosyl-L-methionine site.

This sequence belongs to the RNA methyltransferase RlmH family. In terms of assembly, homodimer.

It is found in the cytoplasm. It carries out the reaction pseudouridine(1915) in 23S rRNA + S-adenosyl-L-methionine = N(3)-methylpseudouridine(1915) in 23S rRNA + S-adenosyl-L-homocysteine + H(+). Functionally, specifically methylates the pseudouridine at position 1915 (m3Psi1915) in 23S rRNA. This is Ribosomal RNA large subunit methyltransferase H from Burkholderia ambifaria (strain MC40-6).